Reading from the N-terminus, the 362-residue chain is Aminomethyltransferase (362 aa).

It belongs to the GcvT family. As to quaternary structure, the glycine cleavage system is composed of four proteins: P, T, L and H.

It catalyses the reaction N(6)-[(R)-S(8)-aminomethyldihydrolipoyl]-L-lysyl-[protein] + (6S)-5,6,7,8-tetrahydrofolate = N(6)-[(R)-dihydrolipoyl]-L-lysyl-[protein] + (6R)-5,10-methylene-5,6,7,8-tetrahydrofolate + NH4(+). The glycine cleavage system catalyzes the degradation of glycine. This chain is Aminomethyltransferase, found in Listeria monocytogenes serotype 4a (strain HCC23).